A 579-amino-acid polypeptide reads, in one-letter code: MLSRSDLLTLLTINFIVVTKGAERISEVSARFTLDAMPGKQMAIDADLNAGLINQAQAQTRRKDVASEADFYGAMDGASKFVRGDAIAGMMILAINLIGGVCIGIFKYNLSADAAFQQYVLMTIGDGLVAQIPSLLLSTAAAIIVTRVSDNGDIAHDVRNQLLASPSVLYTATGIMFVLAVVPGMPHLPFLLFSALLGFTGWRMSKQPLAAEAEEKSLETLTRTITETSEQQVSWETIPLIEPISLSLGYKLVALVDKAQGNPLTQRIRGVRQVISDGNGVLLPEIRIRENFRLKPSQYAIFINGIKADEADIPADKLMALPSSETYGEIDGVQGNDPAYGMPVTWIQAAQKAKALNMGYQVIDSASVIATHVNKIVRSYIPDLFNYDDITQLHNRLSSTAPRLAEDLSAALNYSQLLKVYRALLTEGVSLRDIVTIATVLVASSTVTKDHILLAADVRLALRRSITHPFVRKQELTVYTLNNELENLLTNVVNQAQQGGKVMLDSVPVDPNMLNQFQSTMPQVKEQMKAAGKDPVLLVPPQLRPLLARYARLFAPGLHVLSYNEVPDELELKIMGALM.

The next 3 membrane-spanning stretches (helical) occupy residues 86-106 (AIAG…IGIF), 124-144 (IGDG…AAII), and 177-197 (FVLA…SALL).

The protein belongs to the FHIPEP (flagella/HR/invasion proteins export pore) family.

It is found in the cell inner membrane. This is Putative truncated flagellar export/assembly protein LfhA from Escherichia coli (strain K12).